A 570-amino-acid polypeptide reads, in one-letter code: Conserved oligomeric Golgi complex subunit 8 (570 aa).

This sequence belongs to the COG8 family. Component of the conserved oligomeric Golgi complex which is composed of eight different subunits and is required for normal Golgi morphology and localization.

Its subcellular location is the golgi apparatus membrane. Its function is as follows. Required for normal Golgi function. The polypeptide is Conserved oligomeric Golgi complex subunit 8 (Drosophila melanogaster (Fruit fly)).